The chain runs to 20 residues: Non-specific lipid-transfer protein (20 aa).

Belongs to the plant LTP family.

Functionally, plant non-specific lipid-transfer proteins transfer phospholipids as well as galactolipids across membranes. May play a role in wax or cutin deposition in the cell walls of expanding epidermal cells and certain secretory tissues. The protein is Non-specific lipid-transfer protein of Citrus limon (Lemon).